The chain runs to 670 residues: DNA ligase (670 aa).

NAD(+) contacts are provided by residues 32 to 36 (DSEYD), 81 to 82 (SL), and glutamate 114. The active-site N6-AMP-lysine intermediate is lysine 116. 4 residues coordinate NAD(+): arginine 137, glutamate 174, lysine 291, and lysine 315. Residues cysteine 409, cysteine 412, cysteine 427, and cysteine 433 each coordinate Zn(2+). The 79-residue stretch at 592 to 670 (ASENLFKDKT…EEEFLAQITR (79 aa)) folds into the BRCT domain.

This sequence belongs to the NAD-dependent DNA ligase family. LigA subfamily. Requires Mg(2+) as cofactor. Mn(2+) is required as a cofactor.

The catalysed reaction is NAD(+) + (deoxyribonucleotide)n-3'-hydroxyl + 5'-phospho-(deoxyribonucleotide)m = (deoxyribonucleotide)n+m + AMP + beta-nicotinamide D-nucleotide.. In terms of biological role, DNA ligase that catalyzes the formation of phosphodiester linkages between 5'-phosphoryl and 3'-hydroxyl groups in double-stranded DNA using NAD as a coenzyme and as the energy source for the reaction. It is essential for DNA replication and repair of damaged DNA. This Haemophilus influenzae (strain PittGG) protein is DNA ligase.